The following is a 326-amino-acid chain: L-carnitine dehydrogenase (326 aa).

19–24 (GTGVIG) serves as a coordination point for NAD(+).

This sequence belongs to the 3-hydroxyacyl-CoA dehydrogenase family. L-carnitine dehydrogenase subfamily. Homodimer.

Its subcellular location is the cytoplasm. It catalyses the reaction carnitine + NAD(+) = 3-dehydrocarnitine + NADH + H(+). The protein operates within amine and polyamine metabolism; carnitine metabolism. Its function is as follows. Catalyzes the NAD(+)-dependent oxidation of L-carnitine to 3-dehydrocarnitine. The protein is L-carnitine dehydrogenase of Bacillus cereus (strain ZK / E33L).